The sequence spans 490 residues: Cytochrome P450 2C50 (490 aa).

Ser127 bears the Phosphoserine mark. 2 positions are modified to N6-acetyllysine: Lys249 and Lys375. Residue Cys435 participates in heme binding.

This sequence belongs to the cytochrome P450 family. Requires heme as cofactor. Expressed in heart and liver.

The protein resides in the endoplasmic reticulum membrane. It localises to the microsome membrane. The enzyme catalyses an organic molecule + reduced [NADPH--hemoprotein reductase] + O2 = an alcohol + oxidized [NADPH--hemoprotein reductase] + H2O + H(+). Metabolizes arachidonic acid to several midchain and omega-terminal hydroxyeicosatetraenoic acids (HETE). The chain is Cytochrome P450 2C50 from Mus musculus (Mouse).